The primary structure comprises 56 residues: Large ribosomal subunit protein bL33 (56 aa).

It belongs to the bacterial ribosomal protein bL33 family.

In Anaplasma marginale (strain Florida), this protein is Large ribosomal subunit protein bL33.